A 442-amino-acid chain; its full sequence is tRNA modification GTPase MnmE (442 aa).

Residues Arg-27, Glu-84, and Lys-124 each coordinate (6S)-5-formyl-5,6,7,8-tetrahydrofolate. Positions 221 to 366 constitute a TrmE-type G domain; it reads GLHVVIVGAP…LLDALQAFAE (146 aa). Residues 231–236, 250–256, and 275–278 contribute to the GTP site; these read NAGKSS, SEEAGTT, and DTAG. Mg(2+) is bound by residues Ser-235 and Thr-256. Position 442 (Lys-442) interacts with (6S)-5-formyl-5,6,7,8-tetrahydrofolate.

Belongs to the TRAFAC class TrmE-Era-EngA-EngB-Septin-like GTPase superfamily. TrmE GTPase family. As to quaternary structure, homodimer. Heterotetramer of two MnmE and two MnmG subunits. K(+) is required as a cofactor.

It is found in the cytoplasm. In terms of biological role, exhibits a very high intrinsic GTPase hydrolysis rate. Involved in the addition of a carboxymethylaminomethyl (cmnm) group at the wobble position (U34) of certain tRNAs, forming tRNA-cmnm(5)s(2)U34. The polypeptide is tRNA modification GTPase MnmE (Brucella melitensis biotype 1 (strain ATCC 23456 / CCUG 17765 / NCTC 10094 / 16M)).